The following is a 71-amino-acid chain: Small ribosomal subunit protein bS21 (71 aa).

This sequence belongs to the bacterial ribosomal protein bS21 family.

The sequence is that of Small ribosomal subunit protein bS21 from Buchnera aphidicola subsp. Schizaphis graminum (strain Sg).